A 315-amino-acid chain; its full sequence is Olfactory receptor 10H5 (315 aa).

Residues 1-25 (MQGLNHTSVSEFILVGFSAFPHLQL) are Extracellular-facing. N5 carries an N-linked (GlcNAc...) asparagine glycan. The chain crosses the membrane as a helical span at residues 26-46 (MLFLLFLLMYLFTLLGNLLIM). Over 47–54 (ATVWSERS) the chain is Cytoplasmic. A helical transmembrane segment spans residues 55 to 75 (LHMPMYLFLCALSITEILYTV). The Extracellular portion of the chain corresponds to 76-99 (AIIPRMLADLLSTQRSIAFLACAS). The cysteines at positions 97 and 189 are disulfide-linked. Residues 100 to 120 (QMFFSFSFGFTHSFLLTVMGY) form a helical membrane-spanning segment. Over 121 to 139 (DRYVAICHPLRYNVLMSLR) the chain is Cytoplasmic. The helical transmembrane segment at 140-160 (GCTCRVGCSWAGGLVMGMVVT) threads the bilayer. Residues 161-197 (SAIFHLAFCGHKEIHHFFCHVPPLLKLACGDDVLVVA) are Extracellular-facing. A helical membrane pass occupies residues 198-218 (KGVGLVCITALLGCFLLILLS). Over 219–238 (YAFIVAAILKIPSAEGRNKA) the chain is Cytoplasmic. The chain crosses the membrane as a helical span at residues 239-259 (FSTCASHLTVVVVHYGFASVI). At 260–272 (YLKPKGPQSPEGD) the chain is on the extracellular side. Residues 273 to 293 (TLMGITYTVLTPFLSPIIFSL) form a helical membrane-spanning segment. The Cytoplasmic segment spans residues 294-315 (RNKELKVAMKKTCFTKLFPQNC).

The protein belongs to the G-protein coupled receptor 1 family.

The protein resides in the cell membrane. In terms of biological role, odorant receptor. In Homo sapiens (Human), this protein is Olfactory receptor 10H5 (OR10H5).